Consider the following 339-residue polypeptide: Pre-mRNA-splicing factor syf2 (339 aa).

The segment at 1-136 is disordered; sequence MPPEKKRKTE…LQSDPSQLTA (136 aa). Residues 7–16 are compositionally biased toward basic and acidic residues; the sequence is RKTEPEDKAE. The segment covering 17-37 has biased composition (polar residues); it reads VTQQENDVAESTTEPNNQTVT. Residues 45-93 are compositionally biased toward low complexity; that stretch reads VTEAALATTSSSSPPVLSASETAQPDTAATSQSSSTPPTSTSAAESAAA. Basic and acidic residues predominate over residues 94-103; it reads KARERAERFR. A compositionally biased stretch (polar residues) spans 126 to 135; sequence RLQSDPSQLT.

It belongs to the SYF2 family. Associated with the spliceosome.

Its subcellular location is the nucleus. Involved in pre-mRNA splicing. The sequence is that of Pre-mRNA-splicing factor syf2 (msp-4) from Neurospora crassa (strain ATCC 24698 / 74-OR23-1A / CBS 708.71 / DSM 1257 / FGSC 987).